Reading from the N-terminus, the 681-residue chain is DNA ligase (681 aa).

Residues D34–D38, S83–L84, and E115 each bind NAD(+). K117 functions as the N6-AMP-lysine intermediate in the catalytic mechanism. Positions 138, 185, 301, and 325 each coordinate NAD(+). Zn(2+)-binding residues include C419, C422, C437, and C443. The BRCT domain occupies R602–R681.

This sequence belongs to the NAD-dependent DNA ligase family. LigA subfamily. Requires Mg(2+) as cofactor. It depends on Mn(2+) as a cofactor.

The enzyme catalyses NAD(+) + (deoxyribonucleotide)n-3'-hydroxyl + 5'-phospho-(deoxyribonucleotide)m = (deoxyribonucleotide)n+m + AMP + beta-nicotinamide D-nucleotide.. Functionally, DNA ligase that catalyzes the formation of phosphodiester linkages between 5'-phosphoryl and 3'-hydroxyl groups in double-stranded DNA using NAD as a coenzyme and as the energy source for the reaction. It is essential for DNA replication and repair of damaged DNA. The chain is DNA ligase from Chloroflexus aggregans (strain MD-66 / DSM 9485).